An 824-amino-acid polypeptide reads, in one-letter code: Leucine--tRNA ligase (824 aa).

The short motif at 42 to 52 is the 'HIGH' region element; the sequence is PYPSGKIHMGH. Positions 581–585 match the 'KMSKS' region motif; that stretch reads KMSKS. Position 584 (K584) interacts with ATP.

This sequence belongs to the class-I aminoacyl-tRNA synthetase family.

It is found in the cytoplasm. The catalysed reaction is tRNA(Leu) + L-leucine + ATP = L-leucyl-tRNA(Leu) + AMP + diphosphate. The protein is Leucine--tRNA ligase of Citrifermentans bemidjiense (strain ATCC BAA-1014 / DSM 16622 / JCM 12645 / Bem) (Geobacter bemidjiensis).